Consider the following 179-residue polypeptide: MSEKDFVQVAKLGKTVGLKGYVKLHNLSDFSSQFKKDATFFIKNTKEMLKIKHYNASNSTVLFENYEDIEKAKELTNLILFQSIEKSRQTCKLKKDEFFYFDILECEVFEEDKRLGKVVDILETGASYLFEIQSDEKWVEKKYPKIFFIPYLDKFVKNIDIEKRQIFCTQDAFLILENS.

The 80-residue stretch at 95 to 174 folds into the PRC barrel domain; sequence KDEFFYFDIL…QIFCTQDAFL (80 aa).

The protein belongs to the RimM family. Binds ribosomal protein uS19.

The protein resides in the cytoplasm. In terms of biological role, an accessory protein needed during the final step in the assembly of 30S ribosomal subunit, possibly for assembly of the head region. Essential for efficient processing of 16S rRNA. May be needed both before and after RbfA during the maturation of 16S rRNA. It has affinity for free ribosomal 30S subunits but not for 70S ribosomes. The sequence is that of Ribosome maturation factor RimM from Campylobacter jejuni subsp. doylei (strain ATCC BAA-1458 / RM4099 / 269.97).